The following is a 428-amino-acid chain: Adenylosuccinate synthetase (428 aa).

GTP is bound by residues 12–18 and 40–42; these read GDEGKGK and GHT. Residue D13 is the Proton acceptor of the active site. D13 and G40 together coordinate Mg(2+). IMP-binding positions include 13–16, 38–41, T128, R142, Q222, T237, and R301; these read DEGK and NAGH. The Proton donor role is filled by H41. 297 to 303 is a binding site for substrate; sequence TVTGRSR. Residues R303, 329–331, and 411–413 each bind GTP; these read KLD and STS.

This sequence belongs to the adenylosuccinate synthetase family. As to quaternary structure, homodimer. Mg(2+) serves as cofactor.

The protein localises to the cytoplasm. The catalysed reaction is IMP + L-aspartate + GTP = N(6)-(1,2-dicarboxyethyl)-AMP + GDP + phosphate + 2 H(+). It participates in purine metabolism; AMP biosynthesis via de novo pathway; AMP from IMP: step 1/2. In terms of biological role, plays an important role in the de novo pathway of purine nucleotide biosynthesis. Catalyzes the first committed step in the biosynthesis of AMP from IMP. The chain is Adenylosuccinate synthetase from Phenylobacterium zucineum (strain HLK1).